The primary structure comprises 56 residues: Ovomucoid (56 aa).

Residues 6 to 56 (VDCSEYPKPACTLEYRPLCGSDSKTYANKCNFCNAVVESNGTLTLSHFGKC) form the Kazal-like domain. 3 cysteine pairs are disulfide-bonded: C8/C38, C16/C35, and C24/C56. An N-linked (GlcNAc...) asparagine glycan is attached at N45.

It is found in the secreted. This Oreortyx pictus (Mountain quail) protein is Ovomucoid.